Here is a 169-residue protein sequence, read N- to C-terminus: Mu-like prophage FluMu host-nuclease inhibitor protein gam (169 aa).

It to phage Mu protein gam.

In terms of biological role, protects linear double-stranded DNA of Mu genome from exonuclease degradation. In Haemophilus influenzae (strain ATCC 51907 / DSM 11121 / KW20 / Rd), this protein is Mu-like prophage FluMu host-nuclease inhibitor protein gam.